The following is a 243-amino-acid chain: Epoxyqueuosine reductase QueH (243 aa).

Residues Met-1 to Gln-16 are compositionally biased toward basic and acidic residues. Positions Met-1–Phe-30 are disordered. Residues Cys-49, Cys-50, Cys-128, and Cys-131 each contribute to the [4Fe-4S] cluster site. A disulfide bond links Cys-211 and Cys-213.

The protein belongs to the QueH family.

The enzyme catalyses epoxyqueuosine(34) in tRNA + AH2 = queuosine(34) in tRNA + A + H2O. It functions in the pathway tRNA modification; tRNA-queuosine biosynthesis. In terms of biological role, catalyzes the conversion of epoxyqueuosine (oQ) to queuosine (Q), which is a hypermodified base found in the wobble positions of tRNA(Asp), tRNA(Asn), tRNA(His) and tRNA(Tyr). This chain is Epoxyqueuosine reductase QueH, found in Histophilus somni (strain 129Pt) (Haemophilus somnus).